The primary structure comprises 116 residues: Large ribosomal subunit protein uL18 (116 aa).

Belongs to the universal ribosomal protein uL18 family. Part of the 50S ribosomal subunit; part of the 5S rRNA/L5/L18/L25 subcomplex. Contacts the 5S and 23S rRNAs.

This is one of the proteins that bind and probably mediate the attachment of the 5S RNA into the large ribosomal subunit, where it forms part of the central protuberance. The polypeptide is Large ribosomal subunit protein uL18 (Pseudomonas fluorescens (strain ATCC BAA-477 / NRRL B-23932 / Pf-5)).